The sequence spans 520 residues: Developmental regulatory protein wetA (520 aa).

Disordered regions lie at residues 49-72 (GDLP…NEWS), 104-165 (VPSR…MRSS), 236-295 (QSPS…WQSD), 367-453 (DHSF…GSNK), and 471-496 (LTGV…RRRK). Polar residues-rich tracts occupy residues 63 to 72 (SPQPWSNEWS), 104 to 114 (VPSRPTASHGL), and 155 to 165 (QSFSPSLMRSS). A compositionally biased stretch (low complexity) spans 237–251 (SPSVSMPSPSIAMSA). Residues 252 to 261 (RQQQHYIAQP) are compositionally biased toward polar residues. The span at 262–295 (SSSSLTNSSPSSADDIFSSSHSSDPHSLSSWQSD) shows a compositional bias: low complexity. Polar residues predominate over residues 367–401 (DHSFSSSNMLPATPQKFDTSFNTSQVHNVSRSPSL). Positions 420 to 429 (PTHRRTHSRK) are enriched in basic residues. Over residues 436 to 453 (NAPKPAKASGSSSRGSNK) the composition is skewed to low complexity.

The protein belongs to the wetA family.

Its function is as follows. BrlA, abaA and wetA are pivotal regulators of conidiophore development and conidium maturation. They act individually and together to regulate their own expression and that of numerous other sporulation-specific genes. Responsible for activating a set of genes whose products make up the final two conidial wall layers or direct their assembly and though this activity is responsible for acquisition of spore dormancy. The chain is Developmental regulatory protein wetA from Penicillium rubens (strain ATCC 28089 / DSM 1075 / NRRL 1951 / Wisconsin 54-1255) (Penicillium chrysogenum).